The following is a 110-amino-acid chain: Putative zinc finger protein ORF110 (110 aa).

The C2H2-type zinc finger occupies 3–26 (YVCTACKLKFHTFEEFKIHVHLFH).

This is Putative zinc finger protein ORF110 from Acidianus filamentous virus 1 (isolate United States/Yellowstone) (AFV-1).